The primary structure comprises 701 residues: DNA ligase (701 aa).

A disordered region spans residues 1-21; that stretch reads MSAKSTPDAGPQEQATEAEAE. NAD(+)-binding positions include 50–54, 100–101, and E130; these read DADFD and SL. The N6-AMP-lysine intermediate role is filled by K132. The NAD(+) site is built by R153, E193, K309, and K333. Positions 427, 430, 446, and 452 each coordinate Zn(2+). A BRCT domain is found at 616–701; it reads SIARTLEGLS…LENGPQAPEG (86 aa).

Belongs to the NAD-dependent DNA ligase family. LigA subfamily. Requires Mg(2+) as cofactor. Mn(2+) is required as a cofactor.

It carries out the reaction NAD(+) + (deoxyribonucleotide)n-3'-hydroxyl + 5'-phospho-(deoxyribonucleotide)m = (deoxyribonucleotide)n+m + AMP + beta-nicotinamide D-nucleotide.. Functionally, DNA ligase that catalyzes the formation of phosphodiester linkages between 5'-phosphoryl and 3'-hydroxyl groups in double-stranded DNA using NAD as a coenzyme and as the energy source for the reaction. It is essential for DNA replication and repair of damaged DNA. In Mycobacterium sp. (strain KMS), this protein is DNA ligase.